Here is a 300-residue protein sequence, read N- to C-terminus: MQKYDVKTFQGLILALQDYWAQQGCVIIQPLDMEVGAGTFHPQTFLKSIGPEPMSSAYVQPCRRPTDGRYGENPNRLQHYYQFQVVLKPSPDNIQELYLGSLAAVGIDTLTDEVRFVEDNWESPTLGAWGLGWEIWLNGMEVTQFTYFQQVGGIECSPVTGEITYGLERLAMYIQGVDSIYDLVWADGPLGRVTYGDVFHQNEVEQSTYNFEHANVEDLFAQFDKCEAESQKLIEANLPLPAYEQVMKASHAFNLLDARHAISVTERQRYILRVRALSKACAQSYYDKREALGFPLCKDK.

The protein belongs to the class-II aminoacyl-tRNA synthetase family. In terms of assembly, tetramer of two alpha and two beta subunits.

It localises to the cytoplasm. The catalysed reaction is tRNA(Gly) + glycine + ATP = glycyl-tRNA(Gly) + AMP + diphosphate. The polypeptide is Glycine--tRNA ligase alpha subunit (Pseudoalteromonas translucida (strain TAC 125)).